The sequence spans 122 residues: UPF0145 protein BamMC406_5002 (122 aa).

The protein belongs to the UPF0145 family.

The protein is UPF0145 protein BamMC406_5002 of Burkholderia ambifaria (strain MC40-6).